The primary structure comprises 306 residues: ADP,ATP carrier protein ER-ANT1 (306 aa).

Solcar repeat units lie at residues 8–101, 113–205, and 213–299; these read ERFS…FKNL, KWFA…IKPI, and GNFL…LHQI. Helical transmembrane passes span 10–37, 78–102, 111–131, 181–202, and 216–236; these read FSAD…VKLL, QANV…KNLL, YLKW…TTSL, FGVS…YDTI, and LASF…AYPF. ADP contacts are provided by R83 and K95. Position 240 (R240) interacts with ADP. Residues 240–245 form an important for transport activity region; it reads RRRMML. The short motif at 240–245 is the Nucleotide carrier signature motif element; sequence RRRMML. Residues 276–296 form a helical membrane-spanning segment; the sequence is VTANMLLGVAGAGVLAGYDQL.

Belongs to the mitochondrial carrier (TC 2.A.29) family.

It is found in the endoplasmic reticulum membrane. The enzyme catalyses ADP(in) + ATP(out) = ADP(out) + ATP(in). In terms of biological role, ADP:ATP antiporter that catalyzes the exchange of ADP and ATP across the endoplasmic reticulum membrane. The sequence is that of ADP,ATP carrier protein ER-ANT1 (ER-ANT1) from Arabidopsis thaliana (Mouse-ear cress).